A 986-amino-acid chain; its full sequence is Bifunctional glutamine synthetase adenylyltransferase/adenylyl-removing enzyme (986 aa).

The adenylyl removase stretch occupies residues 1–470 (MAAVAKRTVT…ERHYAALFET (470 aa)). The adenylyl transferase stretch occupies residues 476–986 (AGIGNLVFTG…FDLLLRAGRP (511 aa)).

Belongs to the GlnE family. The cofactor is Mg(2+).

It catalyses the reaction [glutamine synthetase]-O(4)-(5'-adenylyl)-L-tyrosine + phosphate = [glutamine synthetase]-L-tyrosine + ADP. The catalysed reaction is [glutamine synthetase]-L-tyrosine + ATP = [glutamine synthetase]-O(4)-(5'-adenylyl)-L-tyrosine + diphosphate. Functionally, involved in the regulation of glutamine synthetase GlnA, a key enzyme in the process to assimilate ammonia. When cellular nitrogen levels are high, the C-terminal adenylyl transferase (AT) inactivates GlnA by covalent transfer of an adenylyl group from ATP to specific tyrosine residue of GlnA, thus reducing its activity. Conversely, when nitrogen levels are low, the N-terminal adenylyl removase (AR) activates GlnA by removing the adenylyl group by phosphorolysis, increasing its activity. The regulatory region of GlnE binds the signal transduction protein PII (GlnB) which indicates the nitrogen status of the cell. This Mesorhizobium japonicum (strain LMG 29417 / CECT 9101 / MAFF 303099) (Mesorhizobium loti (strain MAFF 303099)) protein is Bifunctional glutamine synthetase adenylyltransferase/adenylyl-removing enzyme.